A 240-amino-acid polypeptide reads, in one-letter code: Protein GrpE (240 aa).

2 disordered regions span residues 1-54 (MSGD…NEAR) and 206-240 (VSMG…DGNG). A compositionally biased stretch (low complexity) spans 215–233 (GASSQPAEAPAADAPAEDS).

Belongs to the GrpE family. As to quaternary structure, homodimer.

It is found in the cytoplasm. Participates actively in the response to hyperosmotic and heat shock by preventing the aggregation of stress-denatured proteins, in association with DnaK and GrpE. It is the nucleotide exchange factor for DnaK and may function as a thermosensor. Unfolded proteins bind initially to DnaJ; upon interaction with the DnaJ-bound protein, DnaK hydrolyzes its bound ATP, resulting in the formation of a stable complex. GrpE releases ADP from DnaK; ATP binding to DnaK triggers the release of the substrate protein, thus completing the reaction cycle. Several rounds of ATP-dependent interactions between DnaJ, DnaK and GrpE are required for fully efficient folding. In Synechococcus sp. (strain WH7803), this protein is Protein GrpE.